A 281-amino-acid polypeptide reads, in one-letter code: Tumor necrosis factor ligand superfamily member 6 (281 aa).

The Cytoplasmic portion of the chain corresponds to 1–80 (MQQPFNYPYP…LKKRGNHSTG (80 aa)). Residues 20–71 (SSPWAPPGTVLPCPTSVPRRPGQRRPPPPPPPPPLPPPPPPPPLPPLPLPPL) are disordered. Residues 43–70 (RRPPPPPPPPPLPPPPPPPPLPPLPLPP) are compositionally biased toward pro residues. The helical; Signal-anchor for type II membrane protein transmembrane segment at 81–102 (LCLLVMFFMVLVALVGLGLGMF) threads the bilayer. The Extracellular portion of the chain corresponds to 103–281 (QLFHLQKELA…SQTFFGLYKL (179 aa)). Residues 118-128 (TSQMHTASSLE) show a composition bias toward polar residues. The segment at 118-142 (TSQMHTASSLEKQIGHPSPPPEKKE) is disordered. The THD domain maps to 145–281 (KVAHLTGKSN…SQTFFGLYKL (137 aa)). An N-linked (GlcNAc...) asparagine glycan is attached at Asn184. A disulfide bridge links Cys202 with Cys233. Residues Asn250 and Asn260 are each glycosylated (N-linked (GlcNAc...) asparagine).

This sequence belongs to the tumor necrosis factor family. Homotrimer. Interacts with ARHGAP9, BAIAP2L1, BTK, CACNB3, CACNB4, CRK, DLG2, DNMBP, DOCK4, EPS8L3, FGR, FYB1, FYN, HCK, ITK, ITSN2, KALRN, LYN, MACC1, MIA, MPP4, MYO15A, NCF1, NCK1, NCK2, NCKIPSD, OSTF1, PIK3R1, PSTPIP1, RIMBP3C, SAMSN1, SH3GL3, SH3PXD2B, SH3PXD2A, SH3RF2, SKAP2, SNX33, SNX9, SORBS3, SPTA1, SRC, SRGAP1, SRGAP2, SRGAP3, TEC, TJP3 and YES1. The soluble form derives from the membrane form by proteolytic processing. The membrane-bound form undergoes two successive intramembrane proteolytic cleavages. The first one is processed by ADAM10 producing an N-terminal fragment, which lacks the receptor-binding extracellular domain. This ADAM10-processed FasL (FasL APL) remnant form is still membrane anchored and further processed by SPPL2A that liberates the FasL intracellular domain (FasL ICD). FasL shedding by ADAM10 is a prerequisite for subsequent intramembrane cleavage by SPPL2A in T-cells. In terms of processing, N-glycosylated. Glycosylation enhances apoptotic activity. Post-translationally, phosphorylated by FGR on tyrosine residues; this is required for ubiquitination and subsequent internalization. Monoubiquitinated.

Its subcellular location is the cell membrane. It is found in the cytoplasmic vesicle lumen. The protein resides in the lysosome lumen. It localises to the secreted. The protein localises to the nucleus. Cytokine that binds to TNFRSF6/FAS, a receptor that transduces the apoptotic signal into cells. Involved in cytotoxic T-cell-mediated apoptosis, natural killer cell-mediated apoptosis and in T-cell development. Initiates fratricidal/suicidal activation-induced cell death (AICD) in antigen-activated T-cells contributing to the termination of immune responses. TNFRSF6/FAS-mediated apoptosis also has a role in the induction of peripheral tolerance. Binds to TNFRSF6B/DcR3, a decoy receptor that blocks apoptosis. Functionally, induces FAS-mediated activation of NF-kappa-B, initiating non-apoptotic signaling pathways. Can induce apoptosis but does not appear to be essential for this process. Its function is as follows. Cytoplasmic form induces gene transcription inhibition. In Homo sapiens (Human), this protein is Tumor necrosis factor ligand superfamily member 6 (FASLG).